The chain runs to 489 residues: Mitochondrial-processing peptidase subunit beta (489 aa).

The transit peptide at 1–45 (MAAAAVSRTLLPVAGRRLWGFTRRLPLRAAAAQPLYFGGDRLRST) directs the protein to the mitochondrion. His-101 contributes to the Zn(2+) binding site. The Proton acceptor role is filled by Glu-104. Residues His-105 and Glu-181 each contribute to the Zn(2+) site.

The protein belongs to the peptidase M16 family. As to quaternary structure, heterodimer of PMPCA (alpha) and PMPCB (beta) subunits, forming the mitochondrial processing protease (MPP) in which PMPCA is involved in substrate recognition and binding and PMPCB is the catalytic subunit. Zn(2+) serves as cofactor.

It localises to the mitochondrion matrix. It carries out the reaction Release of N-terminal transit peptides from precursor proteins imported into the mitochondrion, typically with Arg in position P2.. Binding to PMPCA is required for catalytic activity. Its function is as follows. Catalytic subunit of the essential mitochondrial processing protease (MPP), which cleaves the mitochondrial sequence off newly imported precursors proteins. Preferentially, cleaves after an arginine at position P2. Required for PINK1 turnover by coupling PINK1 mitochondrial import and cleavage, which results in subsequent PINK1 proteolysis. The protein is Mitochondrial-processing peptidase subunit beta (Pmpcb) of Rattus norvegicus (Rat).